We begin with the raw amino-acid sequence, 182 residues long: Hypoxanthine/guanine phosphoribosyltransferase (182 aa).

The protein belongs to the purine/pyrimidine phosphoribosyltransferase family. Archaeal HPRT subfamily. As to quaternary structure, homodimer.

The protein resides in the cytoplasm. It catalyses the reaction IMP + diphosphate = hypoxanthine + 5-phospho-alpha-D-ribose 1-diphosphate. The enzyme catalyses GMP + diphosphate = guanine + 5-phospho-alpha-D-ribose 1-diphosphate. The protein operates within purine metabolism; IMP biosynthesis via salvage pathway; IMP from hypoxanthine: step 1/1. Catalyzes a salvage reaction resulting in the formation of IMP that is energically less costly than de novo synthesis. The polypeptide is Hypoxanthine/guanine phosphoribosyltransferase (Methanosphaerula palustris (strain ATCC BAA-1556 / DSM 19958 / E1-9c)).